We begin with the raw amino-acid sequence, 574 residues long: Actin-binding protein wsp1 (574 aa).

The WH1 domain occupies 19 to 130; it reads IPKSTNKIIA…KKVLDKGCHP (112 aa). Disordered regions lie at residues 144 to 186, 221 to 494, and 517 to 574; these read KGSS…ELLN, AGTP…IAEL, and KSRK…DEWD. Positions 149 to 158 are enriched in polar residues; that stretch reads HAPNNSNIQP. 2 stretches are compositionally biased toward pro residues: residues 230–240 and 251–260; these read PPIPPSIPSSR and PAPPPIPPPS. Low complexity-rich tracts occupy residues 297–306 and 324–335; these read SRVSAAALAA and KPPIGNGSSNSS. The segment covering 352–368 has biased composition (pro residues); sequence PLPPQGRSAPPPPPPRS. S386 bears the Phosphoserine mark. Over residues 415–485 the composition is skewed to pro residues; sequence PPVPTPPSLP…PPPAPAPAPA (71 aa). One can recognise a WH2 domain in the interval 499–518; the sequence is GRANLMASIRASGGMDLLKS. Residues 521-545 are compositionally biased toward polar residues; it reads VSASPSVASTKTSNPPVEAPPSNNL. A compositionally biased stretch (acidic residues) spans 563–574; sequence SDEEDEDDDEWD.

In terms of assembly, interacts with vrp1.

Its subcellular location is the cytoplasm. It is found in the cytoskeleton. Has a role in regulating actin assembly, so regulating polarized growth. This chain is Actin-binding protein wsp1 (wsp1), found in Schizosaccharomyces pombe (strain 972 / ATCC 24843) (Fission yeast).